Here is a 1037-residue protein sequence, read N- to C-terminus: PH and SEC7 domain-containing protein 3 (1037 aa).

The interval 37–70 (EEKTPDSSDHGGSTLLPPTVTNEFPEYGTMEEGG) is disordered. A Phosphoserine modification is found at S76. Disordered stretches follow at residues 169-189 (TASH…GKSP), 236-255 (RVPE…HNPV), 262-284 (REQR…SMGR), 304-335 (EAES…ACGV), and 353-375 (APSE…ESGE). Residues 237–251 (VPESACPVSSSSAGS) are compositionally biased toward low complexity. A compositionally biased stretch (basic and acidic residues) spans 262-277 (REQRSDLGREHPRGYD). Positions 515–723 (NSVYTRGPQE…KALYNSIKNE (209 aa)) constitute an SEC7 domain. Over residues 730–747 (DDEEKKKSPSEGTDEKAN) the composition is skewed to basic and acidic residues. The interval 730–762 (DDEEKKKSPSEGTDEKANGTHPKTISRIGSTTN) is disordered. A compositionally biased stretch (polar residues) spans 750–762 (HPKTISRIGSTTN). S759 carries the post-translational modification Phosphoserine. In terms of domain architecture, PH spans 774–887 (AVYKSGFLAR…WINKINCVAA (114 aa)). Residues 911–941 (ATTTKLSQEEQLKSHESKLKQITTELAEHRS) are a coiled coil. The tract at residues 984–1037 (LLTTDGNEPVGLKKSHSSPSLNPDASPVTAKVKRNVSERKDHRPETPGIKQKVT) is disordered. Residues S998, S1000, S1001, S1003, and S1009 each carry the phosphoserine modification. Positions 1018–1028 (NVSERKDHRPE) are enriched in basic and acidic residues.

In terms of tissue distribution, ubiquitously expressed, with highest levels in liver. Present in brain, with highest levels in olfactory bulb, cortex, hippocampal pyramidal cell layer and cerebellar granule cell layer (at protein level).

The protein resides in the cell membrane. Its subcellular location is the cell projection. The protein localises to the ruffle membrane. It is found in the postsynaptic density. In terms of biological role, guanine nucleotide exchange factor for ARF6. The protein is PH and SEC7 domain-containing protein 3 (Psd3) of Mus musculus (Mouse).